The primary structure comprises 64 residues: Large ribosomal subunit protein bL32 (64 aa).

A disordered region spans residues 1 to 64; the sequence is MAVQQNRKTR…APKHGDETEE (64 aa). Residues 7–16 show a composition bias toward basic residues; sequence RKTRSKRGMR.

This sequence belongs to the bacterial ribosomal protein bL32 family.

The protein is Large ribosomal subunit protein bL32 of Methylococcus capsulatus (strain ATCC 33009 / NCIMB 11132 / Bath).